The primary structure comprises 113 residues: Putative glycerol transporter Lin0367 (113 aa).

The next 4 membrane-spanning stretches (helical) occupy residues 3-23 (IGIA…IRMM), 30-50 (EWGA…VWTI), 63-83 (GTVW…ASLL), and 92-112 (VVNL…LSLF).

It localises to the membrane. Its function is as follows. Could be involved in the glycerol uptake either via facilitated diffusion or active transport. This chain is Putative glycerol transporter Lin0367, found in Listeria innocua serovar 6a (strain ATCC BAA-680 / CLIP 11262).